Consider the following 127-residue polypeptide: Small ribosomal subunit protein uS13 (127 aa).

Residues leucine 96–valine 118 are compositionally biased toward basic residues. The interval leucine 96 to arginine 127 is disordered.

This sequence belongs to the universal ribosomal protein uS13 family. As to quaternary structure, part of the 30S ribosomal subunit. Forms a loose heterodimer with protein S19. Forms two bridges to the 50S subunit in the 70S ribosome.

Functionally, located at the top of the head of the 30S subunit, it contacts several helices of the 16S rRNA. In the 70S ribosome it contacts the 23S rRNA (bridge B1a) and protein L5 of the 50S subunit (bridge B1b), connecting the 2 subunits; these bridges are implicated in subunit movement. Contacts the tRNAs in the A and P-sites. This is Small ribosomal subunit protein uS13 from Myxococcus xanthus (strain DK1622).